Consider the following 252-residue polypeptide: Bidirectional sugar transporter SWEET3b (252 aa).

Residues 1 to 8 (MVSNTIRV) lie on the Extracellular side of the membrane. Residues 9-29 (AVGILGNAASMLLYAAPILTF) traverse the membrane as a helical segment. Residues 10–98 (VGILGNAASM…SIYTWFAPRE (89 aa)) enclose the MtN3/slv 1 domain. Residues 30–43 (RRVIKKGSVEEFSC) are Cytoplasmic-facing. Residues 44–64 (VPYILALFNCLLYTWYGLPVV) form a helical membrane-spanning segment. Residues 65–75 (SSGWENSTVSS) lie on the Extracellular side of the membrane. N-linked (GlcNAc...) asparagine glycosylation is present at N70. A helical transmembrane segment spans residues 76 to 96 (INGLGILLEIAFISIYTWFAP). The Cytoplasmic portion of the chain corresponds to 97–105 (RERKKFVLR). Residues 106–126 (MVLPVLAFFALTAIFSSFLFH) traverse the membrane as a helical segment. The Extracellular portion of the chain corresponds to 127 to 132 (THGLRK). A helical transmembrane segment spans residues 133–153 (VFVGSIGLVASISMYSSPMVA). The MtN3/slv 2 domain occupies 134-219 (FVGSIGLVAS…LYCIYRKSHK (86 aa)). Residues 154–167 (AKQVITTKSVEFMP) lie on the Cytoplasmic side of the membrane. A helical transmembrane segment spans residues 168-188 (FYLSLFSFLSSALWMIYGLLG). Over 189 to 190 (KD) the chain is Extracellular. Residues 191–211 (LFIASPNFIGCPMGILQLVLY) traverse the membrane as a helical segment. The Cytoplasmic segment spans residues 212–252 (CIYRKSHKEAEKLHDIDQENGLKVVTTHEKITGREPEAQRD).

This sequence belongs to the SWEET sugar transporter family. As to quaternary structure, forms homooligomers and/or heterooligomers.

It is found in the cell membrane. Mediates both low-affinity uptake and efflux of sugar across the plasma membrane. This chain is Bidirectional sugar transporter SWEET3b (SWEET3B), found in Oryza sativa subsp. japonica (Rice).